The sequence spans 188 residues: Small acidic protein (188 aa).

Residues 1-188 form a disordered region; sequence MSAREERYQR…KMLFVKSTGS (188 aa). Residues 49–82 are compositionally biased toward basic and acidic residues; that stretch reads GKKEHTGRLVIGDHKSTSHFRSGVEDKKISDQLE. The span at 83-95 shows a compositional bias: polar residues; sequence HQYQQSMDSSMSG. Over residues 130-152 the composition is skewed to acidic residues; it reads SESSNEVSSEEESESESVSEEET. Over residues 153–176 the composition is skewed to basic and acidic residues; it reads AADKQKPTKPNEKDSFPDSRDGKS.

This sequence belongs to the SMAP family.

The sequence is that of Small acidic protein (smap) from Xenopus laevis (African clawed frog).